The following is a 266-amino-acid chain: Indole-3-glycerol phosphate synthase (266 aa).

Belongs to the TrpC family.

The catalysed reaction is 1-(2-carboxyphenylamino)-1-deoxy-D-ribulose 5-phosphate + H(+) = (1S,2R)-1-C-(indol-3-yl)glycerol 3-phosphate + CO2 + H2O. It functions in the pathway amino-acid biosynthesis; L-tryptophan biosynthesis; L-tryptophan from chorismate: step 4/5. The chain is Indole-3-glycerol phosphate synthase from Paracidovorax citrulli (strain AAC00-1) (Acidovorax citrulli).